The following is a 248-amino-acid chain: Small ribosomal subunit protein eS1 (248 aa).

The interval M1 to V21 is disordered.

Belongs to the eukaryotic ribosomal protein eS1 family. Component of the small ribosomal subunit. Mature ribosomes consist of a small (40S) and a large (60S) subunit. The 40S subunit contains about 33 different proteins and 1 molecule of RNA (18S). The 60S subunit contains about 49 different proteins and 3 molecules of RNA (25S, 5.8S and 5S).

It is found in the cytoplasm. This Syntrichia ruralis (Great hairy screw-moss) protein is Small ribosomal subunit protein eS1.